An 860-amino-acid chain; its full sequence is Endo-1,4-beta-xylanase B (860 aa).

A signal peptide spans 1–20; the sequence is MKFSSANKILFSGLVASANA. The GH10 domain occupies 21 to 324; that stretch reads YDLLKDYAGD…KPVYNTLLNI (304 aa). The Proton donor role is filled by Glu144. Catalysis depends on Glu255, which acts as the Nucleophile. The cysteines at positions 278 and 284 are disulfide-linked. N-linked (GlcNAc...) asparagine glycosylation is found at Asn295, Asn309, Asn359, and Asn374. Composition is skewed to polar residues over residues 330 to 362 and 371 to 418; these read RPAS…NKSK and LPGN…NSKT. A disordered region spans residues 330 to 793; the sequence is RPASSSAKTL…TKTLPGGACK (464 aa). Copy 1 of the repeat occupies 375 to 382; it reads KSKTLPGG. The tract at residues 375–782 is 47 X 8 AA tandem repeats of [SKN]-S-K-T-L-P-G-G; sequence KSKTLPGGNS…GGKSKTLPGG (408 aa). Asn390 carries an N-linked (GlcNAc...) asparagine glycan. Repeat 2 spans residues 391–398; it reads KSKTLPGG. Asn406 carries N-linked (GlcNAc...) asparagine glycosylation. 45 repeat units span residues 415–422, 431–438, 439–446, 447–454, 455–462, 463–470, 471–478, 479–486, 487–494, 495–502, 503–510, 511–518, 519–526, 527–534, 535–542, 543–550, 551–558, 559–566, 567–574, 575–582, 583–590, 591–598, 599–606, 607–614, 615–622, 623–630, 631–638, 639–646, 647–654, 655–662, 663–670, 671–678, 679–686, 687–694, 695–702, 703–710, 711–718, 719–726, 727–734, 735–742, 743–750, 751–758, 759–766, 767–774, and 775–782. Composition is skewed to polar residues over residues 461-474 and 485-498; these read GGNS…SSKT. 4 stretches are compositionally biased toward polar residues: residues 525–546, 557–570, 581–594, and 605–618; these read GGNS…SSKT and GGNS…NSKT. Polar residues predominate over residues 645–666; sequence GGNSKTLPGGNSKTLPGGSSKT. The segment covering 741–754 has biased composition (polar residues); the sequence is GGNSKTLPGGSSKT. Positions 824 to 860 constitute a CBM1 domain; the sequence is NCAAKWGQCGGNGFNGPTCCQNGSRCQFVNEWYSQCL. A glycan (N-linked (GlcNAc...) asparagine) is linked at Asn845.

This sequence belongs to the glycosyl hydrolase 10 (cellulase F) family.

It is found in the secreted. The catalysed reaction is Endohydrolysis of (1-&gt;4)-beta-D-xylosidic linkages in xylans.. The protein operates within glycan degradation; xylan degradation. Endo-1,4-beta-xylanase involved in the hydrolysis of xylan, a major structural heterogeneous polysaccharide found in plant biomass representing the second most abundant polysaccharide in the biosphere, after cellulose. Hydrolyzes both unsubstituted (oat spelts) and highly substituted (rye and wheat) forms of arabinoxylanslans. The protein is Endo-1,4-beta-xylanase B (xynB) of Neocallimastix patriciarum (Rumen fungus).